A 777-amino-acid polypeptide reads, in one-letter code: MEYTYQYSWIIPFIPLPVPILIGMGLLLFPTATKNHRRVWSFPSILLLSMVMLLSVYLSIQQINRSFIYQYVWSWTINNDFSLEFGHLIDPLASIMLILITTVGILVLFYSDNYMSHDQGYLRFFAYLSFFNTSMLGLVTSSNLIQIYIFWELVGMCSYLLIGFWFTRPIAATACQKAFVTNRVGDFGLLLGILGLYWITGSFEFRDLFEIVNNLIDNNNQVHFLFVTLCSFLLFAGAVAKSAQFPLHVWLPDAMEGPTPISALIHAATMVAAGIFLVARLLPLFVITPYIMNLISLIGIITVLLGATLALAQKDIKRSLAYSTMSQLGYMMLALGMGSYRAALFHLITHAYSKALLFLGSGSIIHSMESIVGYSPDKSQNMVLMGGLKKHVPITKTAFLVGTLSLCGIPPLACFWSKDEILNDSWLYSPIFAIIACSTAGFTAFYMFRVYLLTFDGHLNVHFQNYSGQKSSSVYSISLWGKQVPKRIQNPFCLLNLLTMNNNESTSFFWNNKCKLDGNVKKRIRPFITVTHFPNRKTFSYPHESDNTMLFSLFVLVLFTLFVAAIGIPFNQEGSDCDILSKLLNPSINLLHQNSNNFTDWYEFVTNASFSVSIALLGIFIATFLYKPIYSSLQNFNLLNSFYKRSANRVMWDKIQNWIYDWSYNRGYIDSFYTISLTGGIRGLAELSHFFDRRVIDGILNGFGLTSFFLGESLKYFGGGRISSYLLLYSIFIFIFLLMDSFFTNLPFFVLCQFLDSSFSMSISGFLLYENFLYENF.

Transmembrane regions (helical) follow at residues 9–29 (WIIP…LLLF), 40–60 (WSFP…YLSI), 89–109 (IDPL…LVLF), 125–145 (FAYL…SNLI), 147–167 (IYIF…FWFT), 185–205 (GDFG…SFEF), 220–240 (NQVH…GAVA), 259–279 (TPIS…FLVA), 290–312 (YIMN…LALA), 328–348 (LGYM…FHLI), 355–375 (ALLF…VGYS), 397–417 (TAFL…CFWS), 426–446 (WLYS…TAFY), 550–570 (LFSL…GIPF), 604–624 (FVTN…IATF), and 731–751 (IFIF…FFVL).

The protein belongs to the complex I subunit 5 family. As to quaternary structure, NDH is composed of at least 16 different subunits, 5 of which are encoded in the nucleus.

The protein resides in the plastid. It localises to the chloroplast thylakoid membrane. The catalysed reaction is a plastoquinone + NADH + (n+1) H(+)(in) = a plastoquinol + NAD(+) + n H(+)(out). It carries out the reaction a plastoquinone + NADPH + (n+1) H(+)(in) = a plastoquinol + NADP(+) + n H(+)(out). NDH shuttles electrons from NAD(P)H:plastoquinone, via FMN and iron-sulfur (Fe-S) centers, to quinones in the photosynthetic chain and possibly in a chloroplast respiratory chain. The immediate electron acceptor for the enzyme in this species is believed to be plastoquinone. Couples the redox reaction to proton translocation, and thus conserves the redox energy in a proton gradient. The sequence is that of NAD(P)H-quinone oxidoreductase subunit 5, chloroplastic (ndhF) from Oenothera elata subsp. hookeri (Hooker's evening primrose).